A 211-amino-acid chain; its full sequence is Nucleoside triphosphate pyrophosphatase (211 aa).

Aspartate 75 serves as the catalytic Proton acceptor.

It belongs to the Maf family. A divalent metal cation serves as cofactor.

Its subcellular location is the cytoplasm. It carries out the reaction a ribonucleoside 5'-triphosphate + H2O = a ribonucleoside 5'-phosphate + diphosphate + H(+). The enzyme catalyses a 2'-deoxyribonucleoside 5'-triphosphate + H2O = a 2'-deoxyribonucleoside 5'-phosphate + diphosphate + H(+). In terms of biological role, nucleoside triphosphate pyrophosphatase. May have a dual role in cell division arrest and in preventing the incorporation of modified nucleotides into cellular nucleic acids. The polypeptide is Nucleoside triphosphate pyrophosphatase (Prochlorococcus marinus (strain NATL1A)).